The sequence spans 515 residues: Low affinity ammonium transporter (515 aa).

Topologically, residues Met-1–Asn-78 are extracellular. A helical transmembrane segment spans residues Ala-79–Ile-99. Residues Ala-100–Lys-111 are Cytoplasmic-facing. A helical membrane pass occupies residues Phe-112–Tyr-132. Over Ser-133 to Cys-140 the chain is Extracellular. A helical membrane pass occupies residues Cys-141–Gly-161. At Arg-162–Asn-171 the chain is on the cytoplasmic side. A helical transmembrane segment spans residues Met-172–Ser-192. The Extracellular portion of the chain corresponds to Ser-193 to Pro-202. The chain crosses the membrane as a helical span at residues Trp-203 to Ile-223. The Cytoplasmic segment spans residues Pro-224–Arg-241. Residues Ile-242–Asn-262 traverse the membrane as a helical segment. The Extracellular portion of the chain corresponds to Gln-263–Gln-270. The helical transmembrane segment at Thr-271 to Ile-291 threads the bilayer. Residues Glu-292–Ala-310 lie on the Cytoplasmic side of the membrane. A helical membrane pass occupies residues Phe-311–Trp-331. At Gln-332–Ser-346 the chain is on the extracellular side. Residues Ala-347–Leu-367 traverse the membrane as a helical segment. Residues Ser-368–Thr-374 are Cytoplasmic-facing. The helical transmembrane segment at Val-375–Val-395 threads the bilayer. Over His-396–Thr-403 the chain is Extracellular. A helical transmembrane segment spans residues Phe-404–Met-424. At Leu-425 to Gly-435 the chain is on the cytoplasmic side. A helical transmembrane segment spans residues Leu-436–Ala-456. The Extracellular segment spans residues Gly-457–Tyr-479. A helical transmembrane segment spans residues Met-480–Phe-500. Residues Met-501 to Glu-515 lie on the Cytoplasmic side of the membrane.

It belongs to the major facilitator superfamily.

It localises to the cell membrane. Its function is as follows. Low affinity ammonium transporter of the plasma membrane. May be involved in drug resistance through pumping them out of the cell. The chain is Low affinity ammonium transporter from Saccharomyces cerevisiae (strain ATCC 204508 / S288c) (Baker's yeast).